Reading from the N-terminus, the 156-residue chain is Arginine repressor (156 aa).

It belongs to the ArgR family.

The protein resides in the cytoplasm. The protein operates within amino-acid biosynthesis; L-arginine biosynthesis [regulation]. Regulates arginine biosynthesis genes. The sequence is that of Arginine repressor from Aeromonas hydrophila subsp. hydrophila (strain ATCC 7966 / DSM 30187 / BCRC 13018 / CCUG 14551 / JCM 1027 / KCTC 2358 / NCIMB 9240 / NCTC 8049).